We begin with the raw amino-acid sequence, 426 residues long: Serine--tRNA ligase (426 aa).

231–233 is a binding site for L-serine; the sequence is TSE. ATP is bound at residue 262 to 264; that stretch reads RSE. E285 serves as a coordination point for L-serine. Residue 349–352 participates in ATP binding; it reads EISS. Residue S385 participates in L-serine binding.

The protein belongs to the class-II aminoacyl-tRNA synthetase family. Type-1 seryl-tRNA synthetase subfamily. Homodimer. The tRNA molecule binds across the dimer.

The protein resides in the cytoplasm. It catalyses the reaction tRNA(Ser) + L-serine + ATP = L-seryl-tRNA(Ser) + AMP + diphosphate + H(+). The enzyme catalyses tRNA(Sec) + L-serine + ATP = L-seryl-tRNA(Sec) + AMP + diphosphate + H(+). It functions in the pathway aminoacyl-tRNA biosynthesis; selenocysteinyl-tRNA(Sec) biosynthesis; L-seryl-tRNA(Sec) from L-serine and tRNA(Sec): step 1/1. Its function is as follows. Catalyzes the attachment of serine to tRNA(Ser). Is also able to aminoacylate tRNA(Sec) with serine, to form the misacylated tRNA L-seryl-tRNA(Sec), which will be further converted into selenocysteinyl-tRNA(Sec). This chain is Serine--tRNA ligase, found in Legionella pneumophila (strain Lens).